The chain runs to 628 residues: Set1/Ash2 histone methyltransferase complex subunit ASH2 (628 aa).

Met1 is modified (N-acetylmethionine). A compositionally biased stretch (gly residues) spans 1–18; sequence MAAAGAGPGQEAGAGPGP. The PHD-type; atypical zinc finger occupies 1–66; the sequence is MAAAGAGPGQ…SGEAEGGEAN (66 aa). Residues 1-107 are disordered; sequence MAAAGAGPGQ…QAGSVDEENG (107 aa). Residues 36 to 65 are compositionally biased toward low complexity; sequence AAGAAAPPGEGISAAPTVEPSSGEAEGGEA. Residues 67–177 form a DNA-binding region; sequence LVDVSGGLET…MCLSALANLT (111 aa). A Phosphoserine modification is found at Ser101. A C4-type zinc finger spans residues 117–150; it reads CGICTKWFTADTFGIDTSSCLPFMTNYSFHCNVC. Positions 235–252 are enriched in basic and acidic residues; the sequence is LVKEHPDPGSKDPEEDYP. The segment at 235–331 is disordered; the sequence is LVKEHPDPGS…AQRLPPHGYP (97 aa). Residues 270–282 are compositionally biased toward polar residues; it reads NQKQSSAVSTSGN. A compositionally biased stretch (gly residues) spans 283-295; the sequence is LNGGIAAGSSGKG. Position 296 is an asymmetric dimethylarginine; by PRMT1 and PRMT5 (Arg296). Residue Ser316 is modified to Phosphoserine. Residues 316–628 form an interaction with RBBP5 region; sequence SDPLFSAQRL…DGRRSPPWEP (313 aa). Residues 360 to 583 enclose the B30.2/SPRY domain; it reads LDCWAGKPIP…VSINFGPCFK (224 aa).

In terms of assembly, interacts with HCFC1. Core component of several methyltransferase-containing complexes including MLL1/MLL, MLL2/3 (also named ASCOM complex) and MLL4/WBP7. Each complex is at least composed of ASH2L, RBBP5, WDR5, DPY30, one or more specific histone methyltransferases (KMT2A/MLL1, KMT2D/MLL2, KMT2C/MLL3 and KMT2B/MLL4), and the facultative components PAGR1, BACC1, CHD8, E2F6, HCFC1, HCFC2, HSP70, INO80C, KDM6A, KANSL1, LAS1L, MAX, MCRS1, MEN1, MGA, KAT8/MOF, NCOA6, PAXIP1/PTIP, PELP1, PHF20, PRP31, RING2, RUVB1/TIP49A, RUVB2/TIP49B, SENP3, TAF1, TAF4, TAF6, TAF7, TAF9, TEX10 and alpha- and beta-tubulin. Component of the SET1 complex, at least composed of the catalytic subunit (SETD1A or SETD1B), WDR5, WDR82, RBBP5, ASH2L/ASH2, CXXC1/CFP1, HCFC1 and DPY30. Found in a complex with RBBP5, ASH2L, DPY30, KMT2A, KMT2D and WDR5. Component of a histone methylation complex composed of at least ZNF335, RBBP5, ASH2L and WDR5; the complex may have histone H3-specific methyltransferase activity, however does not have specificity for 'Lys-4' of histone H3. Within the complex, interacts with ZNF335. Interacts with RBBP5. Components of this complex may associate with components of a nuclear receptor-mediated transcription complex to form a complex at least composed of ZNF335, HCFC1, CCAR2, EMSY, MKI67, RBBP5, ASH2L and WDR5. Within this complex also interacts with CCAR2 and EMSY. Interacts with DPY30. Interacts with SETD1A and SETD1B. Both monomethylated and dimethylated on arginine residues in the C-terminus. Arg-296 is the major site. Methylation is not required for nuclear localization, nor for MLL complex integrity or maintenance of global histone H3K4me3 levels. In terms of tissue distribution, ubiquitously expressed. Predominantly expressed in adult heart and testis and fetal lung and liver, with barely detectable expression in adult lung, liver, kidney, prostate, and peripheral leukocytes.

It is found in the nucleus. Its function is as follows. Transcriptional regulator. Component or associated component of some histone methyltransferase complexes which regulates transcription through recruitment of those complexes to gene promoters. Component of the Set1/Ash2 histone methyltransferase (HMT) complex, a complex that specifically methylates 'Lys-4' of histone H3, but not if the neighboring 'Lys-9' residue is already methylated. As part of the MLL1/MLL complex it is involved in methylation and dimethylation at 'Lys-4' of histone H3. May play a role in hematopoiesis. In association with RBBP5 and WDR5, stimulates the histone methyltransferase activities of KMT2A, KMT2B, KMT2C, KMT2D, SETD1A and SETD1B. This chain is Set1/Ash2 histone methyltransferase complex subunit ASH2 (ASH2L), found in Homo sapiens (Human).